The primary structure comprises 623 residues: Chaperone protein HtpG (623 aa).

The a; substrate-binding stretch occupies residues 1-336; it reads MVSKQQTMGF…ASDLPLNISR (336 aa). Residues 337 to 550 are b; that stretch reads EILQDNKQVE…EQDMGLEMQR (214 aa). Positions 551 to 623 are c; sequence ILQAAGQQIP…NRVNRLLVSS (73 aa).

This sequence belongs to the heat shock protein 90 family. Homodimer.

Its subcellular location is the cytoplasm. In terms of biological role, molecular chaperone. Has ATPase activity. This chain is Chaperone protein HtpG, found in Legionella pneumophila (strain Lens).